A 211-amino-acid polypeptide reads, in one-letter code: MTSGILIASNVLLWGAFLALAALMLGVIRQIGLLHERSAPLGAMMIDHGPDVGERSPIFNVNTFDGEPVLVGRSITPGRPSLLMFTGPSCPICQKLLPIIRSVAAIEETDVILISDGTQAEHRQFLKDHPLDGELYVVSAEIGMRYQVSKVPYGVLLDQDGKILAKGLCNTREHVESLFETIREGHSTLQNYLKDENTAPKFKQVTANKVH.

Residues 5–25 traverse the membrane as a helical segment; it reads ILIASNVLLWGAFLALAALML. One can recognise a Thioredoxin domain in the interval 50 to 187; that stretch reads PDVGERSPIF…LFETIREGHS (138 aa).

The protein localises to the membrane. Its pathway is one-carbon metabolism; methylamine degradation. In terms of biological role, may be specifically involved in the processing, transport, and/or maturation of the MADH beta-subunit. The polypeptide is Methylamine utilization protein MauD (mauD) (Methylophilus methylotrophus (Bacterium W3A1)).